Reading from the N-terminus, the 812-residue chain is MKEFPKNYNFIESEKKWQKIWQEKQIYAYDENIAKDETFVVDTPPPTVSGQLHIGHVYSYTQTDFIVRFQRMMGKNIFYPMGFDDNGLPTERLVEKQRQVKAYNMGREEFINICNEVVASEEEKFRSLFNQIALSVDWNLEYQTISPLSRKISQMSFLDLVKKGEVYRNNQPILWDPVDGTALAQADIEDKEKTSFMNYITFKTEANDEFTIATTRPELLPACVAVFYHPDDKRYQHLAGKFAVTPLFNVKVPLLADPLVQQDKGTGLVMCCTFGDQTDITWWKTHNLPLNTIITKKGTIDFPHEIGIDGLKIKEARAKIIDILKEQELFVKQEEITQTVKCAERSGAPLEVLTVPQWFVKTISHKDELLKRANELNWHPKNMKIRLDNWINAISWDWCISRQRYFGVPFPVWYSKRIGEEGKILYADISQLPVDPLKDLPIGYSKYEVEPDLDVMDTWATSSVSPQLSTWGISDEFAVNKDRHGKLFPMDLRPQAHEIIRTWAFYTILKAHLHQNTLPWKNIMVSGWCLAEDRSKMSKSKGNVLVPEKLLEQYGSDVIRYWSANSKLGADTAYSEDVMKNGKRLVNKLWNAAKFVSQHFDKLSDEDKKTNLIDVKEKITHEFDQWIINKLVELVNNATNELQNYEYANAMHLTEKFFWSVFCDNYLEISKTRAYDEENKNPSGQYSSVLTLYHVMQTLLKLFAPFMPHITEELYQILYSENSIHIKGNWINYGNLNYKIDAKQPERLLEILDHVRKFKAEKNLSIKAEVQLLEVSGIELSKELTSDLKNVTSAKEVKFKPTNDEIKVSILT.

Positions P46–H56 match the 'HIGH' region motif. The short motif at K536–S540 is the 'KMSKS' region element. K539 is a binding site for ATP.

Belongs to the class-I aminoacyl-tRNA synthetase family. ValS type 2 subfamily. Monomer.

The protein resides in the cytoplasm. It carries out the reaction tRNA(Val) + L-valine + ATP = L-valyl-tRNA(Val) + AMP + diphosphate. In terms of biological role, catalyzes the attachment of valine to tRNA(Val). As ValRS can inadvertently accommodate and process structurally similar amino acids such as threonine, to avoid such errors, it has a 'posttransfer' editing activity that hydrolyzes mischarged Thr-tRNA(Val) in a tRNA-dependent manner. The protein is Valine--tRNA ligase of Rickettsia bellii (strain RML369-C).